A 419-amino-acid chain; its full sequence is O-methyltransferase desB (419 aa).

Residues 255–256 (GG), Asp280, 306–307 (DF), and Arg323 each bind S-adenosyl-L-methionine. His326 (proton acceptor) is an active-site residue.

It belongs to the class I-like SAM-binding methyltransferase superfamily. Cation-independent O-methyltransferase family. S-adenosyl-L-methionine is required as a cofactor.

Its pathway is secondary metabolite biosynthesis. Non-reducing polyketide synthase; part of the gene cluster that mediates the biosynthesis of the bicoumarin desertorin. The non-reducing polyketide synthase desS first catalyzes the formation of the pentaketidic 4,7-dihydroxy-5-methylcoumarin from acetyl coenzyme A and 4 malonyl coenzyme A molecules. Further O-methylation by desB leads to the formation of 7-demethylsiderin. Then, an oxidative phenol coupling catalyzed by the cytochrome P450 monooxygenase desC forms the 6,8'-dimer M-desertorin A via dimerization the monomeric precursor, 7-demethylsiderin. M-desertorin A is further converted to M-desertorin C. This Aspergillus desertorum (Emericella desertorum) protein is O-methyltransferase desB.